The following is a 508-amino-acid chain: Light-independent protochlorophyllide reductase subunit B (508 aa).

Asp-36 provides a ligand contact to [4Fe-4S] cluster. Residue Asp-294 is the Proton donor of the active site. 429–430 (GM) provides a ligand contact to substrate.

It belongs to the ChlB/BchB/BchZ family. Protochlorophyllide reductase is composed of three subunits; ChlL, ChlN and ChlB. Forms a heterotetramer of two ChlB and two ChlN subunits. [4Fe-4S] cluster serves as cofactor.

The enzyme catalyses chlorophyllide a + oxidized 2[4Fe-4S]-[ferredoxin] + 2 ADP + 2 phosphate = protochlorophyllide a + reduced 2[4Fe-4S]-[ferredoxin] + 2 ATP + 2 H2O. The protein operates within porphyrin-containing compound metabolism; chlorophyll biosynthesis (light-independent). Component of the dark-operative protochlorophyllide reductase (DPOR) that uses Mg-ATP and reduced ferredoxin to reduce ring D of protochlorophyllide (Pchlide) to form chlorophyllide a (Chlide). This reaction is light-independent. The NB-protein (ChlN-ChlB) is the catalytic component of the complex. The chain is Light-independent protochlorophyllide reductase subunit B from Synechococcus elongatus (strain ATCC 33912 / PCC 7942 / FACHB-805) (Anacystis nidulans R2).